Here is a 317-residue protein sequence, read N- to C-terminus: Transaldolase (317 aa).

K132 acts as the Schiff-base intermediate with substrate in catalysis.

This sequence belongs to the transaldolase family. Type 1 subfamily. In terms of assembly, homodimer.

Its subcellular location is the cytoplasm. The enzyme catalyses D-sedoheptulose 7-phosphate + D-glyceraldehyde 3-phosphate = D-erythrose 4-phosphate + beta-D-fructose 6-phosphate. It functions in the pathway carbohydrate degradation; pentose phosphate pathway; D-glyceraldehyde 3-phosphate and beta-D-fructose 6-phosphate from D-ribose 5-phosphate and D-xylulose 5-phosphate (non-oxidative stage): step 2/3. Transaldolase is important for the balance of metabolites in the pentose-phosphate pathway. The sequence is that of Transaldolase from Yersinia enterocolitica serotype O:8 / biotype 1B (strain NCTC 13174 / 8081).